Reading from the N-terminus, the 311-residue chain is tRNA dimethylallyltransferase (311 aa).

9–16 (GPTAVGKT) serves as a coordination point for ATP. Position 11 to 16 (11 to 16 (TAVGKT)) interacts with substrate. An interaction with substrate tRNA region spans residues 34 to 37 (DSMQ).

Belongs to the IPP transferase family. Monomer. Mg(2+) serves as cofactor.

It carries out the reaction adenosine(37) in tRNA + dimethylallyl diphosphate = N(6)-dimethylallyladenosine(37) in tRNA + diphosphate. In terms of biological role, catalyzes the transfer of a dimethylallyl group onto the adenine at position 37 in tRNAs that read codons beginning with uridine, leading to the formation of N6-(dimethylallyl)adenosine (i(6)A). The protein is tRNA dimethylallyltransferase of Clostridium botulinum (strain Loch Maree / Type A3).